A 134-amino-acid polypeptide reads, in one-letter code: DNA-binding protein inhibitor ID-2 (134 aa).

Residues 1 to 24 are disordered; sequence MKAFSPVRSVRKNSLSDHGLGISR. Phosphoserine is present on residues S14 and S25. A bHLH domain is found at 23–75; it reads SRSKTPVDDPMSLLYNMNDCYSKLKELVPSIPQNKKVSKMEILQHVIDYILDL. Residues 106–115 carry the Nuclear export signal motif; the sequence is LNTDISILSL.

In terms of assembly, interacts with GATA4 and NKX2-5. Interacts with NR0B2. Interacts with CLOCK and BMAL1. Interacts with IFI204. Interacts with NEDD9/HEF1. Interacts with ASB4; this interaction promotes ID2 proteasomal degradation. Post-translationally, ubiquitinated in a ASB4-depedent manner, leading to proteasomal degradation. In terms of processing, phosphorylated in vitro by CDK1, PKA and PKC.

Its subcellular location is the cytoplasm. The protein resides in the nucleus. In terms of biological role, transcriptional regulator (lacking a basic DNA binding domain) which negatively regulates the basic helix-loop-helix (bHLH) transcription factors by forming heterodimers and inhibiting their DNA binding and transcriptional activity. Implicated in regulating a variety of cellular processes, including cellular growth, senescence, differentiation, apoptosis, angiogenesis, and neoplastic transformation. Inhibits skeletal muscle and cardiac myocyte differentiation. Regulates the circadian clock by repressing the transcriptional activator activity of the CLOCK-BMAL1 heterodimer. Restricts the CLOCK and BMAL1 localization to the cytoplasm. Plays a role in both the input and output pathways of the circadian clock: in the input component, is involved in modulating the magnitude of photic entrainment and in the output component, contributes to the regulation of a variety of liver clock-controlled genes involved in lipid metabolism. The chain is DNA-binding protein inhibitor ID-2 (ID2) from Bos taurus (Bovine).